The primary structure comprises 462 residues: L-seryl-tRNA(Sec) selenium transferase (462 aa).

At lysine 294 the chain carries N6-(pyridoxal phosphate)lysine.

It belongs to the SelA family. As to quaternary structure, homodecamer; pentamer of dimers. Binds only one seryl-tRNA(Sec) per dimer. Pyridoxal 5'-phosphate serves as cofactor.

The protein resides in the cytoplasm. It carries out the reaction L-seryl-tRNA(Sec) + selenophosphate + H(+) = L-selenocysteinyl-tRNA(Sec) + phosphate. It participates in aminoacyl-tRNA biosynthesis; selenocysteinyl-tRNA(Sec) biosynthesis; selenocysteinyl-tRNA(Sec) from L-seryl-tRNA(Sec) (bacterial route): step 1/1. Its function is as follows. Converts seryl-tRNA(Sec) to selenocysteinyl-tRNA(Sec) required for selenoprotein biosynthesis. In Yersinia pseudotuberculosis serotype O:1b (strain IP 31758), this protein is L-seryl-tRNA(Sec) selenium transferase.